The chain runs to 506 residues: Voltage-gated potassium channel regulatory subunit KCNG4 (506 aa).

Topologically, residues 1 to 216 (MPMSSRDRDL…EMVEDPQSGL (216 aa)) are cytoplasmic. A helical membrane pass occupies residues 217-238 (PGKVFACLSVLFVATTAVSLCV). The Extracellular segment spans residues 239 to 259 (STMPDFRAEEGKGECTRKCYY). Residues 260–281 (IFVVESICVAWFSLEFCLRFVQ) form a helical membrane-spanning segment. The Cytoplasmic segment spans residues 282-292 (APNKCQFFRGP). A helical transmembrane segment spans residues 293–312 (LNVIDILAISPYYVSLAVSD). The Extracellular portion of the chain corresponds to 313-326 (ESPEAGERPSSSSY). The helical; Voltage-sensor transmembrane segment at 327–351 (LEKVGLVLRVLRALRILYVMRLARH) threads the bilayer. The Cytoplasmic portion of the chain corresponds to 352 to 366 (SLGLQTLGLTVRRCA). Residues 367-388 (REFGLLMLFLAVAVTLFSPLVY) traverse the membrane as a helical segment. At 389–403 (VAENESGRVLEFTSI) the chain is on the extracellular side. An intramembrane region (helical) is located at residues 404–415 (PASYWWAIISMT). Positions 416 to 421 (TVGYGD) match the Selectivity filter motif. The stretch at 416–423 (TVGYGDMV) is an intramembrane region. The Extracellular segment spans residues 424–430 (PRSVPGQ). The helical transmembrane segment at 431–459 (MVALSSILSGILIMAFPATSIFHTFSHSY) threads the bilayer. Residues 460–506 (LELKREQEQVQARLRRLQNTNSASERELLSDVDDLVPEGLTSPGRYM) lie on the Cytoplasmic side of the membrane.

The protein belongs to the potassium channel family. G (TC 1.A.1.2) subfamily. Kv6.4/KCNG4 sub-subfamily. In terms of assembly, heterotetramer with KCNB1. Does not form homomultimer.

The protein localises to the cell membrane. Regulatory subunit of the voltage-gated potassium (Kv) channel which, when coassembled with KCNB1, modulates the kinetics parameters of the heterotetrameric channel namely the time course of activation, deactivation and inactivation and on the voltage-dependence of activation. Potassium channel subunit that does not form functional channels by itself. Reduces the deactivation rate. Modulates the threshold for activation by shifting by approximately 20 mV in hyperpolarizing direction. Markedly changes the inactivation by shifting the voltage dependence of inactivation by approximately 40 mV in hyperpolarizing direction. Acceleratee activation and enhances the time course of activation. This Mus musculus (Mouse) protein is Voltage-gated potassium channel regulatory subunit KCNG4.